Consider the following 147-residue polypeptide: Large ribosomal subunit protein bL9 (147 aa).

The protein belongs to the bacterial ribosomal protein bL9 family.

Functionally, binds to the 23S rRNA. The protein is Large ribosomal subunit protein bL9 of Thermoanaerobacter pseudethanolicus (strain ATCC 33223 / 39E) (Clostridium thermohydrosulfuricum).